A 47-amino-acid polypeptide reads, in one-letter code: Large ribosomal subunit protein uL14c (47 aa).

This sequence belongs to the universal ribosomal protein uL14 family. As to quaternary structure, part of the 50S ribosomal subunit.

The protein localises to the plastid. The protein resides in the chloroplast. Its function is as follows. Binds to 23S rRNA. The protein is Large ribosomal subunit protein uL14c (rpl14) of Vigna unguiculata (Cowpea).